Here is a 578-residue protein sequence, read N- to C-terminus: Translation initiation factor eIF2B subunit gamma (578 aa).

2 positions are modified to phosphoserine: S296 and S300. Disordered regions lie at residues 298–337 (QASFKDPFTGNQQQQNPPTTDDDEDRNHDDDDDYKPSATS) and 535–578 (DDSV…LFER). Phosphothreonine is present on T306. The segment covering 544-578 (EIAEETDSDDRSDEDSDDSEYTDEYEYEDDGLFER) has biased composition (acidic residues).

The protein belongs to the eIF-2B gamma/epsilon subunits family. As to quaternary structure, component of the translation initiation factor 2B (eIF2B) complex which is a heterodecamer of two sets of five different subunits: alpha, beta, gamma, delta and epsilon. Subunits alpha, beta and delta comprise a regulatory subcomplex and subunits epsilon and gamma comprise a catalytic subcomplex. Within the complex, the hexameric regulatory complex resides at the center, with the two heterodimeric catalytic subcomplexes bound on opposite sides.

It is found in the cytoplasm. Its subcellular location is the cytosol. Acts as a component of the translation initiation factor 2B (eIF2B) complex, which catalyzes the exchange of GDP for GTP on the eukaryotic initiation factor 2 (eIF2) complex gamma subunit. Its guanine nucleotide exchange factor activity is repressed when bound to eIF2 complex phosphorylated on the alpha subunit, thereby limiting the amount of methionyl-initiator methionine tRNA available to the ribosome and consequently global translation is repressed. It activates the synthesis of GCN4 in yeast under amino acid starvation conditions by suppressing the inhibitory effects of multiple AUG codons present in the leader of GCN4 mRNA. It may promote either repression or activation of GCN4 expression depending on amino acid availability. GCD1 stabilizes the interaction between eIF2 and GCD6 and stimulates the catalytic activity in vitro. The sequence is that of Translation initiation factor eIF2B subunit gamma (GCD1) from Saccharomyces cerevisiae (strain ATCC 204508 / S288c) (Baker's yeast).